The following is a 170-amino-acid chain: Probable T4-type lysozyme 1 (170 aa).

Glu-13 (proton donor) is an active-site residue. Asp-22 (nucleophile) is an active-site residue.

This sequence belongs to the glycosyl hydrolase 24 family.

The enzyme catalyses Hydrolysis of (1-&gt;4)-beta-linkages between N-acetylmuramic acid and N-acetyl-D-glucosamine residues in a peptidoglycan and between N-acetyl-D-glucosamine residues in chitodextrins.. This Dictyostelium discoideum (Social amoeba) protein is Probable T4-type lysozyme 1.